The chain runs to 100 residues: Small ribosomal subunit protein uS14 (100 aa).

The protein belongs to the universal ribosomal protein uS14 family. As to quaternary structure, part of the 30S ribosomal subunit. Contacts proteins S3 and S10.

Binds 16S rRNA, required for the assembly of 30S particles and may also be responsible for determining the conformation of the 16S rRNA at the A site. The sequence is that of Small ribosomal subunit protein uS14 from Prochlorococcus marinus (strain MIT 9301).